A 289-amino-acid polypeptide reads, in one-letter code: ATP synthase gamma chain (289 aa).

This sequence belongs to the ATPase gamma chain family. F-type ATPases have 2 components, CF(1) - the catalytic core - and CF(0) - the membrane proton channel. CF(1) has five subunits: alpha(3), beta(3), gamma(1), delta(1), epsilon(1). CF(0) has three main subunits: a, b and c.

The protein localises to the cell membrane. Its function is as follows. Produces ATP from ADP in the presence of a proton gradient across the membrane. The gamma chain is believed to be important in regulating ATPase activity and the flow of protons through the CF(0) complex. This is ATP synthase gamma chain from Mycoplasmoides gallisepticum (strain R(low / passage 15 / clone 2)) (Mycoplasma gallisepticum).